A 328-amino-acid polypeptide reads, in one-letter code: 4-hydroxythreonine-4-phosphate dehydrogenase (328 aa).

Substrate-binding residues include His133 and Thr134. Positions 163, 208, and 263 each coordinate a divalent metal cation. Substrate is bound by residues Lys271, Asn280, and Arg289.

Belongs to the PdxA family. In terms of assembly, homodimer. The cofactor is Zn(2+). Mg(2+) is required as a cofactor. Requires Co(2+) as cofactor.

The protein localises to the cytoplasm. It carries out the reaction 4-(phosphooxy)-L-threonine + NAD(+) = 3-amino-2-oxopropyl phosphate + CO2 + NADH. The protein operates within cofactor biosynthesis; pyridoxine 5'-phosphate biosynthesis; pyridoxine 5'-phosphate from D-erythrose 4-phosphate: step 4/5. Functionally, catalyzes the NAD(P)-dependent oxidation of 4-(phosphooxy)-L-threonine (HTP) into 2-amino-3-oxo-4-(phosphooxy)butyric acid which spontaneously decarboxylates to form 3-amino-2-oxopropyl phosphate (AHAP). In Chromobacterium violaceum (strain ATCC 12472 / DSM 30191 / JCM 1249 / CCUG 213 / NBRC 12614 / NCIMB 9131 / NCTC 9757 / MK), this protein is 4-hydroxythreonine-4-phosphate dehydrogenase.